The chain runs to 249 residues: Cilia- and flagella-associated protein 410 (249 aa).

LRR repeat units follow at residues 19 to 40, 41 to 62, and 63 to 84; these read NVRK…REMP, SLEV…RSCR, and RLSE…FYLK. The LRRCT domain occupies 97 to 137; it reads NPCCGTSPHLYRMTVLRNLPHLQKLDNQAVTEEELTRALME. A disordered region spans residues 146–203; it reads HREGAGNGCPKPPYALNSVSSATETSQHLLSYTEETEVQGQTTTDQSPSFSPRDTMRS. The span at 162–175 shows a compositional bias: polar residues; it reads NSVSSATETSQHLL.

Found in a complex with CFAP410, NEK1 and SPATA7. Interacts with NEK1. Expressed in the retina.

It localises to the cell projection. It is found in the cilium. The protein localises to the cytoplasm. Its subcellular location is the cytoskeleton. The protein resides in the cilium basal body. It localises to the mitochondrion. It is found in the photoreceptor outer segment. Its function is as follows. Plays a role in cilia formation and/or maintenance. Plays a role in the regulation of cell morphology and cytoskeletal organization. Involved in DNA damage repair. This Mus musculus (Mouse) protein is Cilia- and flagella-associated protein 410.